A 417-amino-acid chain; its full sequence is UDP-N-acetylglucosamine 1-carboxyvinyltransferase (417 aa).

22–23 serves as a coordination point for phosphoenolpyruvate; sequence KN. R92 is a binding site for UDP-N-acetyl-alpha-D-glucosamine. C116 functions as the Proton donor in the catalytic mechanism. A 2-(S-cysteinyl)pyruvic acid O-phosphothioketal modification is found at C116. UDP-N-acetyl-alpha-D-glucosamine-binding positions include 161–164, D305, and I327; that span reads KVSV.

This sequence belongs to the EPSP synthase family. MurA subfamily.

Its subcellular location is the cytoplasm. It carries out the reaction phosphoenolpyruvate + UDP-N-acetyl-alpha-D-glucosamine = UDP-N-acetyl-3-O-(1-carboxyvinyl)-alpha-D-glucosamine + phosphate. Its pathway is cell wall biogenesis; peptidoglycan biosynthesis. In terms of biological role, cell wall formation. Adds enolpyruvyl to UDP-N-acetylglucosamine. The polypeptide is UDP-N-acetylglucosamine 1-carboxyvinyltransferase (Pelagibacter ubique (strain HTCC1062)).